Reading from the N-terminus, the 462-residue chain is MQEGKISQIIGPVVDVDFPEGQLPSILDALYIVRPDGSRLVLETQQHLGEERVRTVAMESTDGLVRGLSVVNTGKSIQVPVGSEVLGRMLNVVGEPIDGKGAVNTKKTYSIHRSAPKFEDLSTKAEMFETGIKVIDLLEPYSRGGKTGLFGGAGVGKTVLIMELINNIAKQQSGFSVFAGVGERTREGNDLYHEMMESGVIEKTALVFGQMNEPPGARQRVALTGLSIAEYFRDEENRDVLLFIDNIFRFTQAGSEVSALLGRMPSAVGYQPTLATEMGELQDRITSTKNGSVTSVQAIYVPADDLTDPAPATAFAHLDATTVLSRSIAELGIYPAVDPLDSTSRILDPNIVGDDHYNTAQAVKQILQRYKDLQDIIAILGMDELSDEDKLVVSRARKVQRFLSQPFFVAEAFTGLAGKYVKLEETIKGFKEIIAGKHDNLPENAFYLVGTIEEAVEKAKTL.

G151–T158 serves as a coordination point for ATP.

Belongs to the ATPase alpha/beta chains family. In terms of assembly, F-type ATPases have 2 components, CF(1) - the catalytic core - and CF(0) - the membrane proton channel. CF(1) has five subunits: alpha(3), beta(3), gamma(1), delta(1), epsilon(1). CF(0) has four main subunits: a(1), b(1), b'(1) and c(9-12).

It is found in the cell inner membrane. It carries out the reaction ATP + H2O + 4 H(+)(in) = ADP + phosphate + 5 H(+)(out). Functionally, produces ATP from ADP in the presence of a proton gradient across the membrane. The catalytic sites are hosted primarily by the beta subunits. The sequence is that of ATP synthase subunit beta from Chlorobium limicola (strain DSM 245 / NBRC 103803 / 6330).